Here is a 427-residue protein sequence, read N- to C-terminus: Trigger factor (427 aa).

One can recognise a PPIase FKBP-type domain in the interval 163-248; that stretch reads GDTVILDFEG…LHEIKTKEVP (86 aa).

It belongs to the FKBP-type PPIase family. Tig subfamily.

It localises to the cytoplasm. It catalyses the reaction [protein]-peptidylproline (omega=180) = [protein]-peptidylproline (omega=0). In terms of biological role, involved in protein export. Acts as a chaperone by maintaining the newly synthesized protein in an open conformation. Functions as a peptidyl-prolyl cis-trans isomerase. This Listeria monocytogenes serotype 4b (strain CLIP80459) protein is Trigger factor.